The primary structure comprises 281 residues: Probable feruloyl esterase A (281 aa).

Residues 1–21 (MKQFSAKYALILLATAGQALA) form the signal peptide. 3 disulfide bridges follow: Cys-50–Cys-279, Cys-112–Cys-115, and Cys-248–Cys-255. Asp-98 is a substrate binding site. An N-linked (GlcNAc...) asparagine glycan is attached at Asn-100. Position 101 (Tyr-101) interacts with substrate. Ser-154 acts as the Nucleophile in catalysis. Asp-215 (charge relay system) is an active-site residue. His-268 provides a ligand contact to substrate. His-268 serves as the catalytic Charge relay system.

This sequence belongs to the AB hydrolase superfamily. FaeA family.

Its subcellular location is the secreted. It carries out the reaction feruloyl-polysaccharide + H2O = ferulate + polysaccharide.. Involved in degradation of plant cell walls. Hydrolyzes the feruloyl-arabinose ester bond in arabinoxylans, and the feruloyl-galactose ester bond in pectin. This Aspergillus niger (strain ATCC MYA-4892 / CBS 513.88 / FGSC A1513) protein is Probable feruloyl esterase A (faeA).